Consider the following 701-residue polypeptide: Transcription factor PDR8 (701 aa).

Residues 1 to 22 form a disordered region; sequence MDGSHFPMKSTTGEPVSSGKKG. The segment at residues 31 to 59 is a DNA-binding region (zn(2)-C6 fungal-type); it reads CAFCRKRKLKCSQARPMCQQCVIRKLPQC.

The protein resides in the cytoplasm. It is found in the nucleus. Its function is as follows. Up-regulates the transcription of the genes for ATP-binding cassette (ABC) transporters YOR1 and PDR15, for major facilitator superfamily transporter AZR1, for pleiotropic drug resistance SNG1, for alpha-glucosidase YJL216C and for YLL056C. The sequence is that of Transcription factor PDR8 (PDR8) from Saccharomyces cerevisiae (strain ATCC 204508 / S288c) (Baker's yeast).